We begin with the raw amino-acid sequence, 504 residues long: Maturase K (504 aa).

The protein belongs to the intron maturase 2 family. MatK subfamily.

The protein resides in the plastid. It is found in the chloroplast. In terms of biological role, usually encoded in the trnK tRNA gene intron. Probably assists in splicing its own and other chloroplast group II introns. This is Maturase K from Lepidium virginicum (Virginia pepperweed).